The chain runs to 418 residues: Tyrosine--tRNA ligase (418 aa).

Tyr-34 provides a ligand contact to L-tyrosine. The 'HIGH' region motif lies at 39–48 (PTADSLHLGH). L-tyrosine is bound by residues Tyr-169 and Gln-173. A 'KMSKS' region motif is present at residues 229 to 233 (KFGKS). Residue Lys-232 participates in ATP binding. The S4 RNA-binding domain maps to 352 to 418 (LNIVEILVSS…GKKKYAVLTY (67 aa)).

This sequence belongs to the class-I aminoacyl-tRNA synthetase family. TyrS type 1 subfamily. Homodimer.

Its subcellular location is the cytoplasm. The catalysed reaction is tRNA(Tyr) + L-tyrosine + ATP = L-tyrosyl-tRNA(Tyr) + AMP + diphosphate + H(+). In terms of biological role, catalyzes the attachment of tyrosine to tRNA(Tyr) in a two-step reaction: tyrosine is first activated by ATP to form Tyr-AMP and then transferred to the acceptor end of tRNA(Tyr). The chain is Tyrosine--tRNA ligase from Streptococcus uberis (strain ATCC BAA-854 / 0140J).